We begin with the raw amino-acid sequence, 217 residues long: Peptide deformylase (217 aa).

Cys91 and His133 together coordinate Fe cation. Glu134 is an active-site residue. Position 137 (His137) interacts with Fe cation. The segment at 153 to 217 is disordered; sequence VSEDGEEEEE…RRGSAAAKEE (65 aa). Residues 155–176 show a composition bias toward acidic residues; sequence EDGEEEEEAEVAEVMPEPEAEG. Low complexity predominate over residues 177–192; sequence AGEPSAEGAGQAAAEA. Basic and acidic residues predominate over residues 206 to 217; that stretch reads GERRGSAAAKEE.

Belongs to the polypeptide deformylase family. It depends on Fe(2+) as a cofactor.

The catalysed reaction is N-terminal N-formyl-L-methionyl-[peptide] + H2O = N-terminal L-methionyl-[peptide] + formate. Removes the formyl group from the N-terminal Met of newly synthesized proteins. Requires at least a dipeptide for an efficient rate of reaction. N-terminal L-methionine is a prerequisite for activity but the enzyme has broad specificity at other positions. The sequence is that of Peptide deformylase from Symbiobacterium thermophilum (strain DSM 24528 / JCM 14929 / IAM 14863 / T).